Here is a 950-residue protein sequence, read N- to C-terminus: Oxysterol-binding protein-related protein 1 (950 aa).

Positions 1-237 (MNTEAEQQLL…NKVVHKALKR (237 aa)) are interaction with RAB7A. ANK repeat units follow at residues 47–76 (LGWT…KVNM), 80–109 (MGDT…DTTV), and 175–204 (LGNT…DPSL). The region spanning 235 to 334 (LKRFEGPLWK…WLEAIEEHSA (100 aa)) is the PH domain. The stretch at 430–463 (NFKLEQEQEKNKILSEALETLATEHHELERSLVE) forms a coiled coil. An FFAT motif is present at residues 469-483 (SILSEDEFYDALSGS). Disordered stretches follow at residues 795–821 (KKNT…VPDS) and 881–913 (MENG…SEED). The stretch at 877 to 913 (DIRAMENGEIDQASEEKKRLEEKQRAARKNRSKSEED) forms a coiled coil. Positions 890–901 (SEEKKRLEEKQR) are enriched in basic and acidic residues.

The protein belongs to the OSBP family. In terms of assembly, interacts (via FFAT motif) with VAPA. Interacts (via FFAT motif) with VAPB. Interacts with the GTP-bound form of RAB7A. Interacts with OAS1B. Interacts (via FFAT motif) with MOSPD2 (via MSP domain). In terms of tissue distribution, detected in prostate and liver.

It localises to the late endosome. Functionally, binds phospholipids; exhibits strong binding to phosphatidic acid and weak binding to phosphatidylinositol 3-phosphate. Stabilizes GTP-bound RAB7A on late endosomes/lysosomes and alters functional properties of late endocytic compartments via its interaction with RAB7A. Binds 25-hydroxycholesterol and cholesterol. This Rattus norvegicus (Rat) protein is Oxysterol-binding protein-related protein 1.